A 181-amino-acid chain; its full sequence is Probable GTP-binding protein EngB (181 aa).

An EngB-type G domain is found at 18–181; it reads PKNEICFVGR…LQDLVNNLFN (164 aa). GTP-binding positions include 26–33, 52–56, 70–73, 137–140, and 164–166; these read GRSNVGKS, GKTKL, DLPG, TKRD, and VSI. Mg(2+) contacts are provided by S33 and T54.

It belongs to the TRAFAC class TrmE-Era-EngA-EngB-Septin-like GTPase superfamily. EngB GTPase family. The cofactor is Mg(2+).

Necessary for normal cell division and for the maintenance of normal septation. This is Probable GTP-binding protein EngB from Mycoplasma mobile (strain ATCC 43663 / 163K / NCTC 11711) (Mesomycoplasma mobile).